Reading from the N-terminus, the 134-residue chain is Lymphocyte antigen 6A-2/6E-1 (134 aa).

The N-terminal stretch at 1–26 (MDTSHTTKSCLLILLVALLCAERAQG) is a signal peptide. In terms of domain architecture, UPAR/Ly6 spans 27-119 (LECYQCYGVP…NGGSTWTMAG (93 aa)). Disulfide bonds link C29/C53, C32/C41, C46/C74, C78/C98, and C99/C104. G112 carries the GPI-anchor amidated glycine lipid modification. Residues 113-134 (STWTMAGVLLFSLSSVLLQTLL) constitute a propeptide, removed in mature form.

Post-translationally, O-glycosylated. Not N-glycosylated. In terms of processing, not phosphorylated. In terms of tissue distribution, widely expressed.

The protein resides in the cell membrane. Its function is as follows. T-cell activation. The chain is Lymphocyte antigen 6A-2/6E-1 (Ly6a) from Mus musculus (Mouse).